The sequence spans 303 residues: uncharacterized protein (303 aa).

NADP(+) is bound by residues 7 to 12 (GAGGVG) and asparagine 101. Lysine 184 acts as the Proton donor in catalysis. An NADP(+)-binding site is contributed by glutamate 267.

Belongs to the ketopantoate reductase family.

This is an uncharacterized protein from Bacillus subtilis (strain 168).